Consider the following 603-residue polypeptide: Adenine deaminase (603 aa).

This sequence belongs to the metallo-dependent hydrolases superfamily. Adenine deaminase family. In terms of assembly, homodimer. Mn(2+) is required as a cofactor.

It catalyses the reaction adenine + H2O + H(+) = hypoxanthine + NH4(+). The chain is Adenine deaminase from Klebsiella pneumoniae (strain 342).